The following is a 602-amino-acid chain: Elongation factor 4 (602 aa).

Residues 7–189 (SRLRNFCIIA…AVVERVPPPK (183 aa)) form the tr-type G domain. Residues 19-24 (DHGKST) and 136-139 (NKVD) each bind GTP.

It belongs to the TRAFAC class translation factor GTPase superfamily. Classic translation factor GTPase family. LepA subfamily.

Its subcellular location is the cell inner membrane. It carries out the reaction GTP + H2O = GDP + phosphate + H(+). In terms of biological role, required for accurate and efficient protein synthesis under certain stress conditions. May act as a fidelity factor of the translation reaction, by catalyzing a one-codon backward translocation of tRNAs on improperly translocated ribosomes. Back-translocation proceeds from a post-translocation (POST) complex to a pre-translocation (PRE) complex, thus giving elongation factor G a second chance to translocate the tRNAs correctly. Binds to ribosomes in a GTP-dependent manner. This Prochlorococcus marinus (strain MIT 9211) protein is Elongation factor 4.